The chain runs to 122 residues: LOB domain-containing protein 5 (122 aa).

Residues 8 to 109 (RPCSVCITKN…AYLRELQEKI (102 aa)) form the LOB domain.

Belongs to the LOB domain-containing protein family.

This chain is LOB domain-containing protein 5 (LBD5), found in Arabidopsis thaliana (Mouse-ear cress).